Reading from the N-terminus, the 392-residue chain is GTPase Obg (392 aa).

The Obg domain occupies 1–159; sequence MKFVDEATIL…RDLQLELMLL (159 aa). The interval 127–148 is disordered; it reads NTRFKSSVNRTPRQKTMGTPGD. Residues 129–143 show a composition bias toward polar residues; sequence RFKSSVNRTPRQKTM. Positions 160–333 constitute an OBG-type G domain; that stretch reads ADVGMLGMPN…LCWDVMTFII (174 aa). Residues 166–173, 191–195, 213–216, 283–286, and 314–316 contribute to the GTP site; these read GMPNAGKS, FTTLV, DIPG, NKID, and SAA. Mg(2+)-binding residues include Ser173 and Thr193. Over residues 362 to 386 the composition is skewed to acidic residues; that stretch reads EEAEAEAEDDEDWDDDWDEDDEEGV. The segment at 362–392 is disordered; the sequence is EEAEAEAEDDEDWDDDWDEDDEEGVEFIYKR.

This sequence belongs to the TRAFAC class OBG-HflX-like GTPase superfamily. OBG GTPase family. As to quaternary structure, monomer. Requires Mg(2+) as cofactor.

It localises to the cytoplasm. In terms of biological role, an essential GTPase which binds GTP, GDP and possibly (p)ppGpp with moderate affinity, with high nucleotide exchange rates and a fairly low GTP hydrolysis rate. Plays a role in control of the cell cycle, stress response, ribosome biogenesis and in those bacteria that undergo differentiation, in morphogenesis control. The protein is GTPase Obg of Klebsiella pneumoniae subsp. pneumoniae (strain ATCC 700721 / MGH 78578).